The primary structure comprises 252 residues: Isoprenyl transferase (252 aa).

Aspartate 28 is a catalytic residue. Aspartate 28 provides a ligand contact to Mg(2+). Residues glycine 29 to arginine 32, tryptophan 33, arginine 41, histidine 45, and serine 73 to glutamate 75 each bind substrate. The active-site Proton acceptor is asparagine 76. Residues tryptophan 77, arginine 79, arginine 200, and arginine 206–serine 208 contribute to the substrate site. Position 219 (glutamate 219) interacts with Mg(2+).

This sequence belongs to the UPP synthase family. Homodimer. It depends on Mg(2+) as a cofactor.

Its function is as follows. Catalyzes the condensation of isopentenyl diphosphate (IPP) with allylic pyrophosphates generating different type of terpenoids. This Streptococcus pneumoniae serotype 4 (strain ATCC BAA-334 / TIGR4) protein is Isoprenyl transferase.